Reading from the N-terminus, the 111-residue chain is Secreted RxLR effector protein 82 (111 aa).

Positions 1–17 (MFHLYLLLVFETRYTCL) are cleaved as a signal peptide. Residues 28 to 31 (RWLR) carry the RxLR motif.

This sequence belongs to the RxLR effector family.

The protein resides in the secreted. It localises to the host nucleus. Secreted effector that acts as an elicitor that induces cell death in host plant cells. This is Secreted RxLR effector protein 82 from Plasmopara viticola (Downy mildew of grapevine).